Consider the following 214-residue polypeptide: CASP-like protein UU5 (214 aa).

The tract at residues 1-20 (MSTVAQDSAPGGGKIQDAME) is disordered. Over 1–57 (MSTVAQDSAPGGGKIQDAMEQGAPGASSAAVVPEGGHYTQTPSPAFQAVKKNINHMS) the chain is Cytoplasmic. Residues 58–78 (AFSLGLRVAEFVLSVIAFSLM) form a helical membrane-spanning segment. Residues 79-99 (ASADQNGAVYSTFTSYSFVLA) lie on the Extracellular side of the membrane. The chain crosses the membrane as a helical span at residues 100 to 120 (VNVLVVFYTIGQIIMSVLLLV). Topologically, residues 121–138 (SGSTPKKIYLFITFGCDQ) are cytoplasmic. Residues 139-159 (LSAFLLMAAGAAGASVALIIN) traverse the membrane as a helical segment. The Extracellular portion of the chain corresponds to 160 to 193 (RGGVTDAYGNGCIDGKITSFCSHAQASVAFTFLS). Residues 194–214 (FFCMVISSLLGVYSLAPYLIL) traverse the membrane as a helical segment.

The protein belongs to the Casparian strip membrane proteins (CASP) family. In terms of assembly, homodimer and heterodimers.

Its subcellular location is the cell membrane. The protein is CASP-like protein UU5 of Physcomitrium patens (Spreading-leaved earth moss).